A 99-amino-acid chain; its full sequence is SAGA-associated factor 11 (99 aa).

The SGF11-type zinc-finger motif lies at 71–92 (FYCENCGREVSGNRFAAHLQRC).

The protein belongs to the SGF11 family. As to quaternary structure, component of the 1.8 MDa SAGA transcription coactivator-HAT complex. SAGA is built of 5 distinct domains with specialized functions. Within the SAGA complex, SUS1, SGF11, SGF73 and UBP8 form an additional subcomplex of SAGA called the DUB module (deubiquitination module). Interacts directly with SGF73, SUS1 and UBP8.

Its subcellular location is the nucleus. Functionally, functions as a component of the transcription regulatory histone acetylation (HAT) complex SAGA. At the promoters, SAGA is required for recruitment of the basal transcription machinery. It influences RNA polymerase II transcriptional activity through different activities such as TBP interaction and promoter selectivity, interaction with transcription activators, and chromatin modification through histone acetylation and deubiquitination. SAGA acetylates nucleosomal histone H3 to some extent (to form H3K9ac, H3K14ac, H3K18ac and H3K23ac). SAGA interacts with DNA via upstream activating sequences (UASs). Involved in transcriptional regulation of a subset of SAGA-regulated genes. Within the SAGA complex, participates in a subcomplex, that specifically deubiquitinates histones H2B. The polypeptide is SAGA-associated factor 11 (Candida glabrata (strain ATCC 2001 / BCRC 20586 / JCM 3761 / NBRC 0622 / NRRL Y-65 / CBS 138) (Yeast)).